Reading from the N-terminus, the 599-residue chain is Kelch repeat and BTB domain-containing protein 8 (599 aa).

Positions 1-25 (MAASADLSKSSPTPNGIPSSDTAND) are disordered. Positions 7 to 25 (LSKSSPTPNGIPSSDTAND) are enriched in polar residues. The 69-residue stretch at 49-117 (TDIVVEVDHG…AYTSRVILTE (69 aa)) folds into the BTB domain. Residues 152-254 (SIGVFIFADH…MEDTFIEKIP (103 aa)) enclose the BACK domain. Kelch repeat units lie at residues 334-388 (DIYI…YCCG), 389-439 (KMYA…EHKE), 441-479 (IYVL…VYKD), 481-530 (IYYI…LFQN), and 540-586 (QVTV…FECA).

Belongs to the KBTBD8 family. Component of the BCR(KBTBD8) E3 ubiquitin ligase complex, at least composed of CUL3, KBTBD8 and RBX1.

The protein localises to the cytoplasm. Its subcellular location is the cytoskeleton. It is found in the spindle. The protein resides in the golgi apparatus. Substrate-specific adapter of a BCR (BTB-CUL3-RBX1) E3 ubiquitin ligase complex that acts as a regulator of neural crest specification. The BCR(KBTBD8) complex acts by mediating monoubiquitination of NOLC1 and TCOF1: monoubiquitination promotes the formation of a NOLC1-TCOF1 complex that acts as a platform to connect RNA polymerase I with enzymes responsible for ribosomal processing and modification, leading to remodel the translational program of differentiating cells in favor of neural crest specification. This is Kelch repeat and BTB domain-containing protein 8 (Kbtbd8) from Mus musculus (Mouse).